The chain runs to 397 residues: Elongation factor Tu (397 aa).

The tr-type G domain maps to 10 to 206 (KPHVNIGTIG…AIDSYIPTPE (197 aa)). Residues 19 to 26 (GHVDHGKT) are G1. 19 to 26 (GHVDHGKT) is a binding site for GTP. Position 26 (Thr-26) interacts with Mg(2+). Positions 60 to 64 (GITIN) are G2. Positions 81 to 84 (DCPG) are G3. Residues 81 to 85 (DCPGH) and 136 to 139 (NKAD) contribute to the GTP site. A G4 region spans residues 136–139 (NKAD). Positions 174-176 (SAL) are G5.

This sequence belongs to the TRAFAC class translation factor GTPase superfamily. Classic translation factor GTPase family. EF-Tu/EF-1A subfamily. In terms of assembly, monomer.

It is found in the cytoplasm. The enzyme catalyses GTP + H2O = GDP + phosphate + H(+). In terms of biological role, GTP hydrolase that promotes the GTP-dependent binding of aminoacyl-tRNA to the A-site of ribosomes during protein biosynthesis. This is Elongation factor Tu from Clostridium botulinum (strain Loch Maree / Type A3).